The following is a 138-amino-acid chain: Peptide methionine sulfoxide reductase MsrB (138 aa).

One can recognise a MsrB domain in the interval 15–137; the sequence is EAEWRAQLDP…NSASLGFEPR (123 aa). 4 residues coordinate Zn(2+): C54, C57, C103, and C106. C126 functions as the Nucleophile in the catalytic mechanism.

The protein belongs to the MsrB Met sulfoxide reductase family. Zn(2+) is required as a cofactor.

The enzyme catalyses L-methionyl-[protein] + [thioredoxin]-disulfide + H2O = L-methionyl-(R)-S-oxide-[protein] + [thioredoxin]-dithiol. The chain is Peptide methionine sulfoxide reductase MsrB from Methylibium petroleiphilum (strain ATCC BAA-1232 / LMG 22953 / PM1).